Consider the following 126-residue polypeptide: UPF0102 protein P9303_16141 (126 aa).

This sequence belongs to the UPF0102 family.

The chain is UPF0102 protein P9303_16141 from Prochlorococcus marinus (strain MIT 9303).